Consider the following 227-residue polypeptide: uncharacterized protein (227 aa).

The next 7 helical transmembrane spans lie at 15–34 (FIAAEALYSSIIFLICFLIY), 55–77 (TFLFLGLAYFLRFVVLLLSASGV), 92–114 (AFSMAFLAYSGSAAILYTIYSLL), 121–140 (FPGEVVINGVALVIALTSLL), 145–167 (LVFLISQLALVFLLVAAIFVNYS), 180–202 (PLYILLFVFWLLNISLTFRFLPL), and 206–224 (FAIYTLSVAVILIIAYRVL).

The protein resides in the cell membrane. This is an uncharacterized protein from Archaeoglobus fulgidus (strain ATCC 49558 / DSM 4304 / JCM 9628 / NBRC 100126 / VC-16).